Consider the following 179-residue polypeptide: Protein GrpE (179 aa).

Residues 1-45 (MSEEKLTQDPTAEEEQTETADQQESADVNWEQEAAHWKAQAEEHQ) are disordered. Over residues 33 to 45 (EAAHWKAQAEEHQ) the composition is skewed to basic and acidic residues.

It belongs to the GrpE family. Homodimer.

The protein resides in the cytoplasm. Its function is as follows. Participates actively in the response to hyperosmotic and heat shock by preventing the aggregation of stress-denatured proteins, in association with DnaK and GrpE. It is the nucleotide exchange factor for DnaK and may function as a thermosensor. Unfolded proteins bind initially to DnaJ; upon interaction with the DnaJ-bound protein, DnaK hydrolyzes its bound ATP, resulting in the formation of a stable complex. GrpE releases ADP from DnaK; ATP binding to DnaK triggers the release of the substrate protein, thus completing the reaction cycle. Several rounds of ATP-dependent interactions between DnaJ, DnaK and GrpE are required for fully efficient folding. This Brevibacillus choshinensis protein is Protein GrpE.